Here is a 386-residue protein sequence, read N- to C-terminus: Succinyl-diaminopimelate desuccinylase (386 aa).

His-77 provides a ligand contact to Zn(2+). Residue Asp-79 is part of the active site. Zn(2+) is bound at residue Asp-110. Residue Glu-144 is the Proton acceptor of the active site. Zn(2+) contacts are provided by Glu-145, Glu-173, and His-359.

Belongs to the peptidase M20A family. DapE subfamily. As to quaternary structure, homodimer. It depends on Zn(2+) as a cofactor. The cofactor is Co(2+).

It carries out the reaction N-succinyl-(2S,6S)-2,6-diaminopimelate + H2O = (2S,6S)-2,6-diaminopimelate + succinate. The protein operates within amino-acid biosynthesis; L-lysine biosynthesis via DAP pathway; LL-2,6-diaminopimelate from (S)-tetrahydrodipicolinate (succinylase route): step 3/3. In terms of biological role, catalyzes the hydrolysis of N-succinyl-L,L-diaminopimelic acid (SDAP), forming succinate and LL-2,6-diaminopimelate (DAP), an intermediate involved in the bacterial biosynthesis of lysine and meso-diaminopimelic acid, an essential component of bacterial cell walls. This Methylibium petroleiphilum (strain ATCC BAA-1232 / LMG 22953 / PM1) protein is Succinyl-diaminopimelate desuccinylase.